A 370-amino-acid polypeptide reads, in one-letter code: Phosphate acyltransferase (370 aa).

The disordered stretch occupies residues serine 349 to arginine 370.

This sequence belongs to the PlsX family. Homodimer. Probably interacts with PlsY.

Its subcellular location is the cytoplasm. It carries out the reaction a fatty acyl-[ACP] + phosphate = an acyl phosphate + holo-[ACP]. It participates in lipid metabolism; phospholipid metabolism. Its function is as follows. Catalyzes the reversible formation of acyl-phosphate (acyl-PO(4)) from acyl-[acyl-carrier-protein] (acyl-ACP). This enzyme utilizes acyl-ACP as fatty acyl donor, but not acyl-CoA. The protein is Phosphate acyltransferase of Cereibacter sphaeroides (strain ATCC 17029 / ATH 2.4.9) (Rhodobacter sphaeroides).